The sequence spans 797 residues: Inactive deaminase YBR284W (797 aa).

Residues 627–647 form a helical membrane-spanning segment; sequence LVYLFYLSQIPMVVAPLNSIV.

It belongs to the metallo-dependent hydrolases superfamily. Adenosine and AMP deaminases family.

It localises to the membrane. In Saccharomyces cerevisiae (strain ATCC 204508 / S288c) (Baker's yeast), this protein is Inactive deaminase YBR284W.